Here is a 373-residue protein sequence, read N- to C-terminus: Pulmonary surfactant-associated protein B (373 aa).

Positions 1–22 (MAKSHLLPWLLLLPILCGPGTA) are cleaved as a signal peptide. Residues 23 to 187 (AAITYSLACA…PQTQDLSEQL (165 aa)) constitute a propeptide that is removed on maturation. The Saposin A-type domain occupies 24 to 64 (AITYSLACAQGPEFWCQSLEQALQCRALGHCLQEVWGHVEA). 3 consecutive Saposin B-type domains span residues 64–146 (ADDL…KPRH), 191–268 (PIPY…SSED), and 287–362 (QDSD…AAPF). 9 disulfide bridges follow: C68-C142, C71-C136, C99-C111, C195-C264, C198-C258, C222-C233, C291-C358, C294-C352, and C317-C327. N-linked (GlcNAc...) asparagine glycosylation is present at N73. The propeptide occupies 267–373 (EDSAGPALPA…PLQCVHSPHF (107 aa)). An N-linked (GlcNAc...) asparagine glycan is attached at N303.

As to quaternary structure, homodimer; disulfide-linked.

The protein localises to the secreted. It is found in the extracellular space. Its subcellular location is the surface film. Functionally, pulmonary surfactant-associated proteins promote alveolar stability by lowering the surface tension at the air-liquid interface in the peripheral air spaces. SP-B increases the collapse pressure of palmitic acid to nearly 70 millinewtons per meter. In Bos taurus (Bovine), this protein is Pulmonary surfactant-associated protein B (SFTPB).